Here is a 170-residue protein sequence, read N- to C-terminus: Lipoprotein signal peptidase (170 aa).

3 helical membrane passes run 9 to 29 (FNIFIFIISLIFFDQLSKYLV), 72 to 92 (IFFLAMPIFILIFIFSLSLKE), and 96 to 118 (IARISLLLIFSGGVGNVIDRLFR). Active-site residues include aspartate 124 and aspartate 146. Residues 143 to 163 (NFADSYVVIGMILFLVYDFFI) form a helical membrane-spanning segment.

Belongs to the peptidase A8 family.

It localises to the cell inner membrane. It catalyses the reaction Release of signal peptides from bacterial membrane prolipoproteins. Hydrolyzes -Xaa-Yaa-Zaa-|-(S,diacylglyceryl)Cys-, in which Xaa is hydrophobic (preferably Leu), and Yaa (Ala or Ser) and Zaa (Gly or Ala) have small, neutral side chains.. It functions in the pathway protein modification; lipoprotein biosynthesis (signal peptide cleavage). Functionally, this protein specifically catalyzes the removal of signal peptides from prolipoproteins. The protein is Lipoprotein signal peptidase of Borreliella afzelii (strain PKo) (Borrelia afzelii).